We begin with the raw amino-acid sequence, 145 residues long: D-aminoacyl-tRNA deacylase (145 aa).

The short motif at 137-138 is the Gly-cisPro motif, important for rejection of L-amino acids element; the sequence is GP.

This sequence belongs to the DTD family. In terms of assembly, homodimer.

It localises to the cytoplasm. The enzyme catalyses glycyl-tRNA(Ala) + H2O = tRNA(Ala) + glycine + H(+). It catalyses the reaction a D-aminoacyl-tRNA + H2O = a tRNA + a D-alpha-amino acid + H(+). Functionally, an aminoacyl-tRNA editing enzyme that deacylates mischarged D-aminoacyl-tRNAs. Also deacylates mischarged glycyl-tRNA(Ala), protecting cells against glycine mischarging by AlaRS. Acts via tRNA-based rather than protein-based catalysis; rejects L-amino acids rather than detecting D-amino acids in the active site. By recycling D-aminoacyl-tRNA to D-amino acids and free tRNA molecules, this enzyme counteracts the toxicity associated with the formation of D-aminoacyl-tRNA entities in vivo and helps enforce protein L-homochirality. This Brevibacillus brevis (strain 47 / JCM 6285 / NBRC 100599) protein is D-aminoacyl-tRNA deacylase.